Consider the following 134-residue polypeptide: Fluoride-specific ion channel FluC 3 (134 aa).

Transmembrane regions (helical) follow at residues 4 to 24, 35 to 55, 67 to 87, and 100 to 120; these read LIIL…FIML, MDIF…TSFF, MVGT…FGAV, and ICYL…GLMI. Na(+) contacts are provided by glycine 74 and serine 77.

Belongs to the fluoride channel Fluc/FEX (TC 1.A.43) family.

It localises to the cell inner membrane. It carries out the reaction fluoride(in) = fluoride(out). Na(+) is not transported, but it plays an essential structural role and its presence is essential for fluoride channel function. In terms of biological role, fluoride-specific ion channel. Important for reducing fluoride concentration in the cell, thus reducing its toxicity. The protein is Fluoride-specific ion channel FluC 3 of Yersinia pseudotuberculosis serotype I (strain IP32953).